The sequence spans 368 residues: Type 2 DNA topoisomerase 6 subunit A (368 aa).

The Topo IIA-type catalytic domain occupies 9 to 148 (TEDEIARERL…FHMRPEESGA (140 aa)). Tyrosine 103 functions as the O-(5'-phospho-DNA)-tyrosine intermediate in the catalytic mechanism. Mg(2+) contacts are provided by glutamate 201 and aspartate 253.

This sequence belongs to the TOP6A family. As to quaternary structure, homodimer. Heterotetramer of two Top6A and two Top6B chains. It depends on Mg(2+) as a cofactor.

It carries out the reaction ATP-dependent breakage, passage and rejoining of double-stranded DNA.. Functionally, relaxes both positive and negative superturns and exhibits a strong decatenase activity. This is Type 2 DNA topoisomerase 6 subunit A from Natronomonas pharaonis (strain ATCC 35678 / DSM 2160 / CIP 103997 / JCM 8858 / NBRC 14720 / NCIMB 2260 / Gabara) (Halobacterium pharaonis).